Here is a 76-residue protein sequence, read N- to C-terminus: Omega-conotoxin-like TxO3 (76 aa).

The N-terminal stretch at 1 to 22 (MKLTCVVIVAVLFLTAWTFVTA) is a signal peptide. A propeptide spanning residues 23 to 52 (VPHSSNALENLYLKAHHEMNNPEASELNKR) is cleaved from the precursor. Disulfide bonds link Cys53-Cys67, Cys60-Cys71, and Cys66-Cys75.

It belongs to the conotoxin O1 superfamily. Expressed by the venom duct.

The protein localises to the secreted. Functionally, omega-conotoxins act at presynaptic membranes, they bind and block voltage-gated calcium channels (Cav). In Conus textile (Cloth-of-gold cone), this protein is Omega-conotoxin-like TxO3 (TXO3).